Here is a 383-residue protein sequence, read N- to C-terminus: Beta-1,3-galactosyltransferase 4 (383 aa).

Topologically, residues 1–8 (MPLSLFRR) are cytoplasmic. Residues 9–29 (LLLAALLLVIIWTLFGPSGIG) traverse the membrane as a helical segment. Residues 30 to 383 (EELLSLSLAS…RCRVIAWLHS (354 aa)) are Lumenal-facing. The N-linked (GlcNAc...) asparagine glycan is linked to Asn-149.

This sequence belongs to the glycosyltransferase 31 family.

It localises to the golgi apparatus membrane. It carries out the reaction a ganglioside GM2 (d18:1(4E)) + UDP-alpha-D-galactose = a ganglioside GM1 (d18:1(4E)) + UDP + H(+). It catalyses the reaction a ganglioside GM2 + UDP-alpha-D-galactose = a ganglioside GM1 + UDP + H(+). The catalysed reaction is a ganglioside GD2 (d18:1(4E)) + UDP-alpha-D-galactose = a ganglioside GD1b (d18:1(4E)) + UDP + H(+). The enzyme catalyses a ganglioside GA2 (d18:1(4E)) + UDP-alpha-D-galactose = a ganglioside GA1 (d18:1(4E)) + UDP + H(+). Its pathway is protein modification; protein glycosylation. Functionally, involved in GM1/GD1B/GA1 ganglioside biosynthesis. The polypeptide is Beta-1,3-galactosyltransferase 4 (B3GALT4) (Canis lupus familiaris (Dog)).